The chain runs to 237 residues: 1-(5-phosphoribosyl)-5-[(5-phosphoribosylamino)methylideneamino] imidazole-4-carboxamide isomerase (237 aa).

The Proton acceptor role is filled by Asp8. The active-site Proton donor is the Asp130.

The protein belongs to the HisA/HisF family.

The protein localises to the cytoplasm. It carries out the reaction 1-(5-phospho-beta-D-ribosyl)-5-[(5-phospho-beta-D-ribosylamino)methylideneamino]imidazole-4-carboxamide = 5-[(5-phospho-1-deoxy-D-ribulos-1-ylimino)methylamino]-1-(5-phospho-beta-D-ribosyl)imidazole-4-carboxamide. Its pathway is amino-acid biosynthesis; L-histidine biosynthesis; L-histidine from 5-phospho-alpha-D-ribose 1-diphosphate: step 4/9. This Caldicellulosiruptor saccharolyticus (strain ATCC 43494 / DSM 8903 / Tp8T 6331) protein is 1-(5-phosphoribosyl)-5-[(5-phosphoribosylamino)methylideneamino] imidazole-4-carboxamide isomerase.